Consider the following 79-residue polypeptide: uncharacterized protein (79 aa).

This is an uncharacterized protein from Bacillus subtilis (strain 168).